A 211-amino-acid polypeptide reads, in one-letter code: Protein-L-isoaspartate O-methyltransferase (211 aa).

Serine 62 is a catalytic residue.

The protein belongs to the methyltransferase superfamily. L-isoaspartyl/D-aspartyl protein methyltransferase family.

It localises to the cytoplasm. The catalysed reaction is [protein]-L-isoaspartate + S-adenosyl-L-methionine = [protein]-L-isoaspartate alpha-methyl ester + S-adenosyl-L-homocysteine. Functionally, catalyzes the methyl esterification of L-isoaspartyl residues in peptides and proteins that result from spontaneous decomposition of normal L-aspartyl and L-asparaginyl residues. It plays a role in the repair and/or degradation of damaged proteins. This chain is Protein-L-isoaspartate O-methyltransferase, found in Shewanella loihica (strain ATCC BAA-1088 / PV-4).